The primary structure comprises 455 residues: Nuclear distribution protein nudF (455 aa).

The LisH domain maps to 9–41; sequence QAEELHKSMIAYLVASDLPDTAAALRREVNLSE. Residues 61–88 adopt a coiled-coil conformation; the sequence is TSIARLQKKIMDLESRNATLQSELDNST. 8 WD repeats span residues 113-154, 156-196, 200-239, 242-281, 287-347, 349-388, 392-438, and 440-455; these read SHRD…RTLK, HTRA…KNIR, GHDH…CVKT, GHTD…NIEH, GHEN…LMTL, GHDS…KCVK, AHES…IQMR, and VVAT…IFAG. The segment at 408–431 is disordered; the sequence is KNVPGGDGAAEGEGNDKNGAGSEN.

This sequence belongs to the WD repeat LIS1/nudF family. In terms of assembly, self-associates. Interacts with nudE and dynein.

It localises to the cytoplasm. Its subcellular location is the cytoskeleton. The protein resides in the spindle pole. Functionally, positively regulates the activity of the minus-end directed microtubule motor protein dynein. May enhance dynein-mediated microtubule sliding by targeting dynein to the microtubule plus end. Required for nuclear migration during vegetative growth as well as development. Required for retrograde early endosome (EE) transport from the hyphal tip. Required for localization of dynein to the mitotic spindle poles. Recruits additional proteins to the dynein complex at SPBs. The protein is Nuclear distribution protein nudF of Aspergillus flavus (strain ATCC 200026 / FGSC A1120 / IAM 13836 / NRRL 3357 / JCM 12722 / SRRC 167).